The following is a 240-amino-acid chain: Uridylate kinase (240 aa).

13-16 (KLSG) lines the ATP pocket. The interval 21 to 26 (GEKGFG) is involved in allosteric activation by GTP. UMP is bound at residue glycine 55. ATP is bound by residues glycine 56 and arginine 60. Residues aspartate 75 and 136–143 (IGNPYFST) contribute to the UMP site. Residues asparagine 164, tyrosine 170, and aspartate 173 each contribute to the ATP site.

It belongs to the UMP kinase family. As to quaternary structure, homohexamer.

Its subcellular location is the cytoplasm. It carries out the reaction UMP + ATP = UDP + ADP. Its pathway is pyrimidine metabolism; CTP biosynthesis via de novo pathway; UDP from UMP (UMPK route): step 1/1. With respect to regulation, allosterically activated by GTP. Inhibited by UTP. Its function is as follows. Catalyzes the reversible phosphorylation of UMP to UDP. This Staphylococcus aureus (strain USA300) protein is Uridylate kinase.